The primary structure comprises 199 residues: Large ribosomal subunit protein uL10 (199 aa).

It belongs to the universal ribosomal protein uL10 family. Part of the ribosomal stalk of the 50S ribosomal subunit. The N-terminus interacts with L11 and the large rRNA to form the base of the stalk. The C-terminus forms an elongated spine to which L12 dimers bind in a sequential fashion forming a multimeric L10(L12)X complex.

In terms of biological role, forms part of the ribosomal stalk, playing a central role in the interaction of the ribosome with GTP-bound translation factors. The sequence is that of Large ribosomal subunit protein uL10 (rplJ) from Aquifex aeolicus (strain VF5).